A 432-amino-acid polypeptide reads, in one-letter code: Adenylosuccinate synthetase (432 aa).

GTP is bound by residues 13–19 (GDEGKGK) and 41–43 (GHT). Catalysis depends on Asp14, which acts as the Proton acceptor. Mg(2+) contacts are provided by Asp14 and Gly41. IMP-binding positions include 14 to 17 (DEGK), 39 to 42 (NAGH), Thr130, Arg144, Gln225, Thr240, and Arg304. Catalysis depends on His42, which acts as the Proton donor. 300 to 306 (AVTGRPR) is a substrate binding site. Residues Arg306, 332–334 (KLD), and 415–417 (STG) each bind GTP.

Belongs to the adenylosuccinate synthetase family. As to quaternary structure, homodimer. Mg(2+) serves as cofactor.

Its subcellular location is the cytoplasm. The enzyme catalyses IMP + L-aspartate + GTP = N(6)-(1,2-dicarboxyethyl)-AMP + GDP + phosphate + 2 H(+). It functions in the pathway purine metabolism; AMP biosynthesis via de novo pathway; AMP from IMP: step 1/2. In terms of biological role, plays an important role in the de novo pathway of purine nucleotide biosynthesis. Catalyzes the first committed step in the biosynthesis of AMP from IMP. In Haemophilus influenzae (strain PittGG), this protein is Adenylosuccinate synthetase.